Reading from the N-terminus, the 246-residue chain is Sensory transduction protein LytT (246 aa).

Residues 3-117 (KVLVVDDEML…RIVQTLKKYK (115 aa)) enclose the Response regulatory domain. In terms of domain architecture, HTH LytTR-type spans 142 to 246 (LALPIEESIV…AKELKKLLRI (105 aa)).

Post-translationally, phosphorylated by LytS.

It is found in the cytoplasm. Functionally, member of the two-component regulatory system LytS/LytT that probably regulates genes involved in cell wall metabolism. The polypeptide is Sensory transduction protein LytT (lytT) (Bacillus cereus (strain ATCC 14579 / DSM 31 / CCUG 7414 / JCM 2152 / NBRC 15305 / NCIMB 9373 / NCTC 2599 / NRRL B-3711)).